The following is a 201-amino-acid chain: 3-isopropylmalate dehydratase small subunit (201 aa).

Belongs to the LeuD family. LeuD type 1 subfamily. Heterodimer of LeuC and LeuD.

It catalyses the reaction (2R,3S)-3-isopropylmalate = (2S)-2-isopropylmalate. Its pathway is amino-acid biosynthesis; L-leucine biosynthesis; L-leucine from 3-methyl-2-oxobutanoate: step 2/4. Catalyzes the isomerization between 2-isopropylmalate and 3-isopropylmalate, via the formation of 2-isopropylmaleate. This chain is 3-isopropylmalate dehydratase small subunit, found in Shigella dysenteriae serotype 1 (strain Sd197).